The sequence spans 312 residues: HPr kinase/phosphorylase (312 aa).

Catalysis depends on residues His139 and Lys160. 154-161 contributes to the ATP binding site; sequence GSSGVGKS. Residue Ser161 participates in Mg(2+) binding. Residue Asp178 is the Proton acceptor; for phosphorylation activity. Proton donor; for dephosphorylation activity of the active site. An important for the catalytic mechanism of both phosphorylation and dephosphorylation region spans residues 202 to 211; sequence LEIRGLGIIN. A Mg(2+)-binding site is contributed by Glu203. The active site involves Arg244. The segment at 265 to 270 is important for the catalytic mechanism of dephosphorylation; the sequence is PVRPGR.

It belongs to the HPrK/P family. In terms of assembly, homohexamer. It depends on Mg(2+) as a cofactor.

The enzyme catalyses [HPr protein]-L-serine + ATP = [HPr protein]-O-phospho-L-serine + ADP + H(+). The catalysed reaction is [HPr protein]-O-phospho-L-serine + phosphate + H(+) = [HPr protein]-L-serine + diphosphate. In terms of biological role, catalyzes the ATP- as well as the pyrophosphate-dependent phosphorylation of a specific serine residue in HPr, a phosphocarrier protein of the phosphoenolpyruvate-dependent sugar phosphotransferase system (PTS). HprK/P also catalyzes the pyrophosphate-producing, inorganic phosphate-dependent dephosphorylation (phosphorolysis) of seryl-phosphorylated HPr (P-Ser-HPr). The two antagonistic activities of HprK/P are regulated by several intracellular metabolites, which change their concentration in response to the absence or presence of rapidly metabolisable carbon sources (glucose, fructose, etc.) in the growth medium. Therefore, by controlling the phosphorylation state of HPr, HPrK/P is a sensor enzyme that plays a major role in the regulation of carbon metabolism and sugar transport: it mediates carbon catabolite repression (CCR), and regulates PTS-catalyzed carbohydrate uptake and inducer exclusion. The protein is HPr kinase/phosphorylase of Listeria welshimeri serovar 6b (strain ATCC 35897 / DSM 20650 / CCUG 15529 / CIP 8149 / NCTC 11857 / SLCC 5334 / V8).